We begin with the raw amino-acid sequence, 605 residues long: ATP-dependent RNA helicase dbp9 (605 aa).

The segment at 1–30 is disordered; the sequence is MKRKLDANDVPSPEAADKKEKKEEDDADFE. Basic and acidic residues predominate over residues 15–24; the sequence is AADKKEKKEE. The Q motif signature appears at 27-55; sequence ADFESLNLDPRLRQALIKEKFTKPTLVQA. Positions 58 to 236 constitute a Helicase ATP-binding domain; it reads IPLALEGKDI…GLFCRSPVTL (179 aa). 71 to 78 contacts ATP; that stretch reads AKTGSGKT. Positions 184–187 match the DEAD box motif; it reads DEAD. The 223-residue stretch at 247–469 folds into the Helicase C-terminal domain; the sequence is GVSQFVVRCA…EVKPYHFEMK (223 aa). 2 disordered regions span residues 339–373 and 564–605; these read ARKS…VSGK and RKQN…RGRK. The span at 350-361 shows a compositional bias: acidic residues; that stretch reads EAGSSDEDEGEP. Residues 572 to 591 show a composition bias toward basic residues; sequence RKAREKNRGKGNGRKFAGVK.

The protein belongs to the DEAD box helicase family. DDX56/DBP9 subfamily.

The protein resides in the nucleus. It localises to the nucleolus. The enzyme catalyses ATP + H2O = ADP + phosphate + H(+). Functionally, ATP-binding RNA helicase involved in the biogenesis of 60S ribosomal subunits and is required for the normal formation of 25S and 5.8S rRNAs. In Aspergillus oryzae (strain ATCC 42149 / RIB 40) (Yellow koji mold), this protein is ATP-dependent RNA helicase dbp9 (dbp9).